We begin with the raw amino-acid sequence, 71 residues long: UPF0435 protein RBAM_008100 (71 aa).

This sequence belongs to the UPF0435 family.

The sequence is that of UPF0435 protein RBAM_008100 from Bacillus velezensis (strain DSM 23117 / BGSC 10A6 / LMG 26770 / FZB42) (Bacillus amyloliquefaciens subsp. plantarum).